The chain runs to 502 residues: Rab11 family-interacting protein 4B (502 aa).

Disordered stretches follow at residues 1-49 (MSIQ…EEGI) and 71-98 (SALSSASLNEEQFEDYGEGEDGDCTTSS). Positions 15-29 (EEGRGVERDSDRDSA) are enriched in basic and acidic residues. The span at 71-80 (SALSSASLNE) shows a compositional bias: polar residues. Residues 81–93 (EQFEDYGEGEDGD) are compositionally biased toward acidic residues. Residues 228 to 482 (DVKTKLKQEN…EEINLRLRQY (255 aa)) are a coiled coil. Positions 439 to 501 (EAKNLFATQT…DHNPSILEIK (63 aa)) constitute an FIP-RBD domain.

As to quaternary structure, homodimer. Forms a complex with Rab11 (rab11a or rab11b) and arf6.

It localises to the recycling endosome membrane. The protein localises to the cleavage furrow. It is found in the midbody. The protein resides in the cytoplasmic vesicle. In terms of biological role, acts as a regulator of endocytic traffic by participating in membrane delivery. Required for the abscission step in cytokinesis, possibly by acting as an 'address tag' delivering recycling endosome membranes to the cleavage furrow during late cytokinesis. In Danio rerio (Zebrafish), this protein is Rab11 family-interacting protein 4B (rab11fip4b).